Consider the following 1184-residue polypeptide: DNA-directed RNA polymerase subunit beta (1184 aa).

The interval Asp-1160 to Glu-1184 is disordered.

This sequence belongs to the RNA polymerase beta chain family. In terms of assembly, the RNAP catalytic core consists of 2 alpha, 1 beta, 1 beta' and 1 omega subunit. When a sigma factor is associated with the core the holoenzyme is formed, which can initiate transcription.

The enzyme catalyses RNA(n) + a ribonucleoside 5'-triphosphate = RNA(n+1) + diphosphate. Its function is as follows. DNA-dependent RNA polymerase catalyzes the transcription of DNA into RNA using the four ribonucleoside triphosphates as substrates. The polypeptide is DNA-directed RNA polymerase subunit beta (Listeria innocua serovar 6a (strain ATCC BAA-680 / CLIP 11262)).